Consider the following 298-residue polypeptide: Probable mitochondrial 2-oxodicarboxylate carrier (298 aa).

The next 6 membrane-spanning stretches (helical) occupy residues 6–26, 62–81, 105–125, 159–179, 203–223, and 267–287; these read IPFPVTFAAGAVAGISEVLTL, HRLYRGILPPILMEAPKRAL, ALSILTGSCAGFTETFVVVPF, ALYNGFEATMWRHVVWNAGYF, LIAGTIGGIFGTFLSTPFDVI, and VLRLGPGGGILLVVFNSVIEF. 3 Solcar repeats span residues 6–92, 102–188, and 197–287; these read IPFP…YSKL, SSPA…IRNS, and GEIR…VIEF.

It belongs to the mitochondrial carrier (TC 2.A.29) family.

It is found in the mitochondrion inner membrane. In terms of biological role, transports C5-C7 oxodicarboxylates across the inner membranes of mitochondria. In Schizosaccharomyces pombe (strain 972 / ATCC 24843) (Fission yeast), this protein is Probable mitochondrial 2-oxodicarboxylate carrier.